A 227-amino-acid chain; its full sequence is Probable septum site-determining protein MinC (227 aa).

This sequence belongs to the MinC family. As to quaternary structure, interacts with MinD and FtsZ.

Functionally, cell division inhibitor that blocks the formation of polar Z ring septums. Rapidly oscillates between the poles of the cell to destabilize FtsZ filaments that have formed before they mature into polar Z rings. Prevents FtsZ polymerization. This is Probable septum site-determining protein MinC from Clostridioides difficile (strain 630) (Peptoclostridium difficile).